A 581-amino-acid polypeptide reads, in one-letter code: Proline--tRNA ligase (581 aa).

It belongs to the class-II aminoacyl-tRNA synthetase family. ProS type 1 subfamily. Homodimer.

The protein localises to the cytoplasm. The catalysed reaction is tRNA(Pro) + L-proline + ATP = L-prolyl-tRNA(Pro) + AMP + diphosphate. Its function is as follows. Catalyzes the attachment of proline to tRNA(Pro) in a two-step reaction: proline is first activated by ATP to form Pro-AMP and then transferred to the acceptor end of tRNA(Pro). As ProRS can inadvertently accommodate and process non-cognate amino acids such as alanine and cysteine, to avoid such errors it has two additional distinct editing activities against alanine. One activity is designated as 'pretransfer' editing and involves the tRNA(Pro)-independent hydrolysis of activated Ala-AMP. The other activity is designated 'posttransfer' editing and involves deacylation of mischarged Ala-tRNA(Pro). The misacylated Cys-tRNA(Pro) is not edited by ProRS. The sequence is that of Proline--tRNA ligase from Polaromonas naphthalenivorans (strain CJ2).